A 701-amino-acid chain; its full sequence is Capsid protein VP1 (701 aa).

The protein belongs to the caliciviridae capsid protein family. As to quaternary structure, homodimer. Homomultimer. Interacts with the minor capsid protein VP2. May bind to VP3 and Vpg proteins. In terms of processing, cleaved by the viral protease to produce mature capsid protein.

It is found in the virion. The protein localises to the host cytoplasm. In terms of biological role, capsid protein self assembles to form an icosahedral capsid with a T=3 symmetry, about 38 nm in diameter, and consisting of 180 capsid proteins. A smaller form of capsid with a diameter of 23 nm might be capsid proteins assembled as icosahedron with T=1 symmetry. The capsid encapsulates the genomic RNA and is decorated with VP2 proteins. This chain is Capsid protein VP1, found in Vesicular exanthema of swine virus serotype A48 (isolate Swine/United States/A48/1948) (VESV).